Reading from the N-terminus, the 314-residue chain is uncharacterized protein (314 aa).

In terms of domain architecture, HTH araC/xylS-type spans 192 to 289 (TEVKLHIKDN…GSSPGLFRSL (98 aa)). 2 DNA-binding regions (H-T-H motif) span residues 209 to 230 (TDVA…AAEL) and 257 to 279 (IKEI…SAKI).

This is an uncharacterized protein from Bacillus subtilis (strain 168).